An 82-amino-acid polypeptide reads, in one-letter code: Teratocyte protein CftICK-IV (82 aa).

Positions 1 to 21 (MAKILLTFIILTCLIVTITPA) are cleaved as a signal peptide.

In terms of processing, contains 4 disulfide bonds. In terms of tissue distribution, abundantly expressed by teratocytes, which are extra-embryonic cells released by parasitoid wasps into their hosts during larval eclosion.

The protein resides in the secreted. Functionally, this endoparasitoid wasp peptide has immununosuppressive and insecticidal activities. Suppress cellular immunity which is detectable as a reduction of hemocyte spread index in the host. In vivo, ingestion of this peptide moderately reduces leaf consumption of D.saccharalis, a permissive host for the lepidoptere C.flavipes. This chain is Teratocyte protein CftICK-IV, found in Cotesia flavipes (Parasitic wasp).